Here is a 507-residue protein sequence, read N- to C-terminus: MTDDPGSGFTTVWNAVVSELNGDPKVDDGPSSDANLSAPLTPQQRAWLNLVQPLTIVEGFALLSVPSSFVQNEIERHLRAPITDALSRRLGHQIQLGVRIAPPATDEADDTTVPPSENPATTSPDTTTDNDEIDDSAAARGDNQHSWPSYFTERPRNTDSATAGVTSLNRRYTFDTFVIGASNRFAHAAALAIAEAPARAYNPLFIWGESGLGKTHLLHAAGNYAQRLFPGMRVKYVSTEEFTNDFINSLRDDRKVAFKRSYRDVDVLLVDDIQFIEGKEGIQEEFFHTFNTLHNANKQIVISSDRPPKQLATLEDRLRTRFEWGLITDVQPPELETRIAILRKKAQMERLAVPDDVLELIASSIERNIRELEGALIRVTAFASLNKTPIDKALAEIVLRDLIADANTMQISAATIMAATAEYFDTTVEELRGPGKTRALAQSRQIAMYLCRELTDLSLPKIGQAFGRDHTTVMYAQRKILSEMAERREVFDHVKELTTRIRQRSKR.

Positions 1 to 112 are domain I, interacts with DnaA modulators; it reads MTDDPGSGFT…PATDEADDTT (112 aa). Residues 99-162 form a disordered region; the sequence is RIAPPATDEA…ERPRNTDSAT (64 aa). Positions 113–127 are enriched in polar residues; it reads VPPSENPATTSPDTT. A domain II region spans residues 113–166; that stretch reads VPPSENPATTSPDTTTDNDEIDDSAAARGDNQHSWPSYFTERPRNTDSATAGVT. The interval 167–383 is domain III, AAA+ region; that stretch reads SLNRRYTFDT…GALIRVTAFA (217 aa). Glycine 211, glycine 213, lysine 214, and threonine 215 together coordinate ATP. The tract at residues 384–507 is domain IV, binds dsDNA; that stretch reads SLNKTPIDKA…TTRIRQRSKR (124 aa).

The protein belongs to the DnaA family. Oligomerizes as a right-handed, spiral filament on DNA at oriC.

The protein resides in the cytoplasm. In terms of biological role, plays an essential role in the initiation and regulation of chromosomal replication. ATP-DnaA binds to the origin of replication (oriC) to initiate formation of the DNA replication initiation complex once per cell cycle. Binds the DnaA box (a 9 base pair repeat at the origin) and separates the double-stranded (ds)DNA. Forms a right-handed helical filament on oriC DNA; dsDNA binds to the exterior of the filament while single-stranded (ss)DNA is stabiized in the filament's interior. The ATP-DnaA-oriC complex binds and stabilizes one strand of the AT-rich DNA unwinding element (DUE), permitting loading of DNA polymerase. After initiation quickly degrades to an ADP-DnaA complex that is not apt for DNA replication. Binds acidic phospholipids. In Mycobacterium bovis (strain BCG / Tokyo 172 / ATCC 35737 / TMC 1019), this protein is Chromosomal replication initiator protein DnaA.